The sequence spans 335 residues: Nuclear envelope-associated protein 2 (335 aa).

Coiled coils occupy residues 55 to 85 (RKEA…ELVA) and 125 to 260 (CSVL…LKKK). The Bipartite nuclear localization signal motif lies at 239–260 (KTKELESQLERQRRADQELKKK). Residues 312-329 (FWDTSGFKIVVSMSMLIL) traverse the membrane as a helical segment.

Forms homomers and heteromers with NEAP1 and NEAP3. Interacts with SUN1 and SUN2.

Its subcellular location is the nucleus inner membrane. The protein resides in the nucleus. It is found in the nucleoplasm. The sequence is that of Nuclear envelope-associated protein 2 from Arabidopsis thaliana (Mouse-ear cress).